The chain runs to 80 residues: Cell division protein ZapB (80 aa).

Residues 3–80 (LEILEQLEAK…GLLGKMDEVE (78 aa)) are a coiled coil. A disordered region spans residues 41–60 (LEQANNGRSEVEQEAQRARD). A compositionally biased stretch (basic and acidic residues) spans 49-60 (SEVEQEAQRARD).

Belongs to the ZapB family. Homodimer. The ends of the coiled-coil dimer bind to each other, forming polymers. Interacts with FtsZ.

The protein localises to the cytoplasm. Functionally, non-essential, abundant cell division factor that is required for proper Z-ring formation. It is recruited early to the divisome by direct interaction with FtsZ, stimulating Z-ring assembly and thereby promoting cell division earlier in the cell cycle. Its recruitment to the Z-ring requires functional FtsA or ZipA. In Aliivibrio fischeri (strain ATCC 700601 / ES114) (Vibrio fischeri), this protein is Cell division protein ZapB.